The primary structure comprises 513 residues: ATP synthase subunit alpha 2 (513 aa).

169-176 (GDRQTGKT) serves as a coordination point for ATP.

The protein belongs to the ATPase alpha/beta chains family. As to quaternary structure, F-type ATPases have 2 components, CF(1) - the catalytic core - and CF(0) - the membrane proton channel. CF(1) has five subunits: alpha(3), beta(3), gamma(1), delta(1), epsilon(1). CF(0) has three main subunits: a(1), b(2) and c(9-12). The alpha and beta chains form an alternating ring which encloses part of the gamma chain. CF(1) is attached to CF(0) by a central stalk formed by the gamma and epsilon chains, while a peripheral stalk is formed by the delta and b chains.

Its subcellular location is the cell inner membrane. The enzyme catalyses ATP + H2O + 4 H(+)(in) = ADP + phosphate + 5 H(+)(out). In terms of biological role, produces ATP from ADP in the presence of a proton gradient across the membrane. The alpha chain is a regulatory subunit. In Pseudoalteromonas atlantica (strain T6c / ATCC BAA-1087), this protein is ATP synthase subunit alpha 2.